Consider the following 71-residue polypeptide: Large ribosomal subunit protein uL29 (71 aa).

This sequence belongs to the universal ribosomal protein uL29 family.

The polypeptide is Large ribosomal subunit protein uL29 (Methanococcus maripaludis (strain C7 / ATCC BAA-1331)).